Consider the following 232-residue polypeptide: Ribonuclease 3 (232 aa).

One can recognise an RNase III domain in the interval Phe6–Gly133. Glu46 is a binding site for Mg(2+). Asp50 is an active-site residue. The Mg(2+) site is built by Asp119 and Glu122. Glu122 is a catalytic residue. Residues Asp160 to Lys229 form the DRBM domain.

This sequence belongs to the ribonuclease III family. As to quaternary structure, homodimer. Mg(2+) is required as a cofactor.

It is found in the cytoplasm. The catalysed reaction is Endonucleolytic cleavage to 5'-phosphomonoester.. Its function is as follows. Digests double-stranded RNA. Involved in the processing of primary rRNA transcript to yield the immediate precursors to the large and small rRNAs (23S and 16S). Processes some mRNAs, and tRNAs when they are encoded in the rRNA operon. Processes pre-crRNA and tracrRNA of type II CRISPR loci if present in the organism. This is Ribonuclease 3 from Clostridium botulinum (strain Eklund 17B / Type B).